Reading from the N-terminus, the 442-residue chain is F-box protein KIB2 (442 aa).

An F-box domain is found at 62-109 (SKQPVLVLDLLRSILERLSFVDFHRGRCISLEWYSASESCLAVKNPTS). Residues 236 to 243 (HKKGDENY) carry the Nuclear localization signal motif.

In terms of assembly, interacts with ASK7/BIN2/SK21.

The protein resides in the cytoplasm. The protein localises to the nucleus. It localises to the nucleolus. Functionally, component of SCF(ASK-cullin-F-box) E3 ubiquitin ligase complexes, which may mediate the ubiquitination and subsequent proteasomal degradation of target proteins. Required for brassinosteroid (BR) signal transduction. Mediates ASK7/BIN2/SK21 inactivation both by competing with substrate binding (e.g. BZR1) and by promoting its ubiquitination and subsequent proteasomal degradation. The protein is F-box protein KIB2 of Arabidopsis thaliana (Mouse-ear cress).